Here is a 180-residue protein sequence, read N- to C-terminus: Shikimate kinase (180 aa).

An ATP-binding site is contributed by 14-19; it reads GAGKTC. Residue T18 coordinates Mg(2+). 3 residues coordinate substrate: D36, R60, and G82. R120 is an ATP binding site. R139 serves as a coordination point for substrate.

It belongs to the shikimate kinase family. In terms of assembly, monomer. It depends on Mg(2+) as a cofactor.

The protein localises to the cytoplasm. The catalysed reaction is shikimate + ATP = 3-phosphoshikimate + ADP + H(+). It participates in metabolic intermediate biosynthesis; chorismate biosynthesis; chorismate from D-erythrose 4-phosphate and phosphoenolpyruvate: step 5/7. In terms of biological role, catalyzes the specific phosphorylation of the 3-hydroxyl group of shikimic acid using ATP as a cosubstrate. The polypeptide is Shikimate kinase (Stenotrophomonas maltophilia (strain R551-3)).